The primary structure comprises 383 residues: Spermidine/putrescine import ATP-binding protein PotA (383 aa).

The region spanning 12-246 is the ABC transporter domain; sequence IALRDISKVY…PSTPFVAGFI (235 aa). 48 to 55 contributes to the ATP binding site; it reads GPSGCGKT.

Belongs to the ABC transporter superfamily. Spermidine/putrescine importer (TC 3.A.1.11.1) family. The complex is composed of two ATP-binding proteins (PotA), two transmembrane proteins (PotB and PotC) and a solute-binding protein (PotD).

It is found in the cell membrane. The catalysed reaction is ATP + H2O + polyamine-[polyamine-binding protein]Side 1 = ADP + phosphate + polyamineSide 2 + [polyamine-binding protein]Side 1.. Part of the ABC transporter complex PotABCD involved in spermidine/putrescine import. Responsible for energy coupling to the transport system. The protein is Spermidine/putrescine import ATP-binding protein PotA of Acidothermus cellulolyticus (strain ATCC 43068 / DSM 8971 / 11B).